A 382-amino-acid polypeptide reads, in one-letter code: Glutamyl-tRNA reductase (382 aa).

Substrate-binding positions include 38 to 41 (TCNR), serine 85, 90 to 92 (ENQ), and glutamine 96. The Nucleophile role is filled by cysteine 39. 164-169 (GAGEMG) is an NADP(+) binding site.

The protein belongs to the glutamyl-tRNA reductase family. Homodimer.

The enzyme catalyses (S)-4-amino-5-oxopentanoate + tRNA(Glu) + NADP(+) = L-glutamyl-tRNA(Glu) + NADPH + H(+). The protein operates within porphyrin-containing compound metabolism; protoporphyrin-IX biosynthesis; 5-aminolevulinate from L-glutamyl-tRNA(Glu): step 1/2. Catalyzes the NADPH-dependent reduction of glutamyl-tRNA(Glu) to glutamate 1-semialdehyde (GSA). The chain is Glutamyl-tRNA reductase from Methanococcus maripaludis (strain C5 / ATCC BAA-1333).